Reading from the N-terminus, the 420-residue chain is FLYWCH transcription factor 3 (420 aa).

The segment covering 87–104 has biased composition (low complexity); sequence SSTSPDSQPSSSSSVMSS. Disordered stretches follow at residues 87–107 and 119–138; these read SSTS…STDE and KINK…YTPR. Residues 123-134 show a composition bias toward polar residues; that stretch reads AQRQSSPNSSKP. An FLYWCH-type zinc finger spans residues 140 to 195; that stretch reads IRERVLFDEHLYVFDKCSYDSKKRFFRCERKNTCPARIHTPFDAERVIHKVQVHNH.

Functionally, probable transcription factor. May bind to the promoters of target genes, including micro-RNA genes, in order to repress expression, and acting redundantly with flh-2. In Caenorhabditis elegans, this protein is FLYWCH transcription factor 3.